Consider the following 317-residue polypeptide: ADP-L-glycero-D-manno-heptose-6-epimerase (317 aa).

NADP(+) contacts are provided by residues 10 to 11 (FI), 31 to 32 (DD), K38, K53, 76 to 80 (QGACS), and N93. The Proton acceptor role is filled by Y140. K144 provides a ligand contact to NADP(+). N169 is a binding site for substrate. I170 and K178 together coordinate NADP(+). The active-site Proton acceptor is K178. Residues A180, H187, 201–204 (FEGC), R214, and Y278 contribute to the substrate site.

This sequence belongs to the NAD(P)-dependent epimerase/dehydratase family. HldD subfamily. In terms of assembly, homopentamer. Requires NADP(+) as cofactor.

The enzyme catalyses ADP-D-glycero-beta-D-manno-heptose = ADP-L-glycero-beta-D-manno-heptose. Its pathway is nucleotide-sugar biosynthesis; ADP-L-glycero-beta-D-manno-heptose biosynthesis; ADP-L-glycero-beta-D-manno-heptose from D-glycero-beta-D-manno-heptose 7-phosphate: step 4/4. Functionally, catalyzes the interconversion between ADP-D-glycero-beta-D-manno-heptose and ADP-L-glycero-beta-D-manno-heptose via an epimerization at carbon 6 of the heptose. The polypeptide is ADP-L-glycero-D-manno-heptose-6-epimerase (Nitrosococcus oceani (strain ATCC 19707 / BCRC 17464 / JCM 30415 / NCIMB 11848 / C-107)).